The following is a 387-amino-acid chain: Large ribosomal subunit protein uL3 (387 aa).

It belongs to the universal ribosomal protein uL3 family.

The protein localises to the cytoplasm. The sequence is that of Large ribosomal subunit protein uL3 (RPL3) from Kluyveromyces lactis (strain ATCC 8585 / CBS 2359 / DSM 70799 / NBRC 1267 / NRRL Y-1140 / WM37) (Yeast).